The chain runs to 204 residues: MIILDNSIQTKSKAYSISKLITINTLGPEGTSSEYAAKNFITNFTLLQGVNSKLSLHDTFESCIEKTLQSPLEYTIVPHAYDGIKHFYMRPDLQLLQIFRCDTPMYGLAVRPDFEYTDDMLDKAVIVSHPSPINLIKYFTRKDVTFDLVNSTSAAAKRVKDGLSDIALTNELARQKYGLQFVKTFKSIPMSWSLFGKGEIHDEN.

It belongs to the prephenate decarboxylase family.

The protein localises to the cytoplasm. It catalyses the reaction prephenate + H(+) = 3-[(4R)-4-hydroxycyclohexa-1,5-dien-1-yl]-2-oxopropanoate + CO2. Its pathway is antibiotic biosynthesis; bacilysin biosynthesis. Its function is as follows. Part of the bacABCDEF operon responsible for the biosynthesis of the nonribosomally synthesized dipeptide antibiotic bacilysin, composed of L-alanine and L-anticapsin. Bacilysin is an irreversible inactivator of the glutaminase domain of glucosamine synthetase. BacA is an unusual prephenate decarboxylase that avoids the typical aromatization of the cyclohexadienol ring of prephenate. BacA catalyzes the protonation of prephenate (1-carboxy-4-hydroxy-alpha-oxo-2,5-cyclohexadiene-1-propanoic acid) at C6 position, followed by a decarboxylation to produce the endocyclic-delta(4),delta(8)-7R-dihydro-hydroxyphenylpyruvate (en-H2HPP). En-H2HPP is able to undergo a slow nonenzymatic isomerization to produce the exocyclic-delta(3),delta(5)-dihydro-hydroxyphenylpyruvate (ex-H2HPP). BacA isomerizes only the pro-R double bond in prephenate. The protein is Prephenate decarboxylase of Bacillus amyloliquefaciens (Bacillus velezensis).